A 257-amino-acid chain; its full sequence is DNA repair protein RecO (257 aa).

It belongs to the RecO family.

Its function is as follows. Involved in DNA repair and RecF pathway recombination. The protein is DNA repair protein RecO of Clostridium kluyveri (strain ATCC 8527 / DSM 555 / NBRC 12016 / NCIMB 10680 / K1).